A 283-amino-acid chain; its full sequence is NADH-ubiquinone oxidoreductase 30.4 kDa subunit, mitochondrial (283 aa).

A mitochondrion-targeting transit peptide spans 1–17 (MASKLCRSRALASALRS). Residues 258–283 (GAGIDRKPESFKLPTPKPETKPEEKK) form a disordered region.

It belongs to the complex I 30 kDa subunit family. As to quaternary structure, complex I is composed of about 40 different subunits. This is a component of the iron-sulfur protein fraction.

It localises to the mitochondrion inner membrane. It carries out the reaction a ubiquinone + NADH + 5 H(+)(in) = a ubiquinol + NAD(+) + 4 H(+)(out). Core subunit of the mitochondrial membrane respiratory chain NADH dehydrogenase (Complex I) that is believed to belong to the minimal assembly required for catalysis. Complex I functions in the transfer of electrons from NADH to the respiratory chain. The immediate electron acceptor for the enzyme is believed to be ubiquinone. In Neurospora crassa (strain ATCC 24698 / 74-OR23-1A / CBS 708.71 / DSM 1257 / FGSC 987), this protein is NADH-ubiquinone oxidoreductase 30.4 kDa subunit, mitochondrial (nuo-31).